Here is a 464-residue protein sequence, read N- to C-terminus: Glutamate--tRNA ligase 1 (464 aa).

The 'HIGH' region motif lies at 10-20 (PSPTGYLHIGG). Residues 238–242 (KLSKR) carry the 'KMSKS' region motif. Lys-241 is an ATP binding site.

It belongs to the class-I aminoacyl-tRNA synthetase family. Glutamate--tRNA ligase type 1 subfamily. In terms of assembly, monomer.

It localises to the cytoplasm. The enzyme catalyses tRNA(Glu) + L-glutamate + ATP = L-glutamyl-tRNA(Glu) + AMP + diphosphate. In terms of biological role, catalyzes the attachment of glutamate to tRNA(Glu) in a two-step reaction: glutamate is first activated by ATP to form Glu-AMP and then transferred to the acceptor end of tRNA(Glu). The sequence is that of Glutamate--tRNA ligase 1 from Helicobacter hepaticus (strain ATCC 51449 / 3B1).